A 244-amino-acid polypeptide reads, in one-letter code: Phosphoadenosine 5'-phosphosulfate reductase (244 aa).

Cysteine 239 acts as the Nucleophile; cysteine thiosulfonate intermediate in catalysis.

It belongs to the PAPS reductase family. CysH subfamily.

It is found in the cytoplasm. It catalyses the reaction [thioredoxin]-disulfide + sulfite + adenosine 3',5'-bisphosphate + 2 H(+) = [thioredoxin]-dithiol + 3'-phosphoadenylyl sulfate. Its pathway is sulfur metabolism; hydrogen sulfide biosynthesis; sulfite from sulfate: step 3/3. Functionally, catalyzes the formation of sulfite from phosphoadenosine 5'-phosphosulfate (PAPS) using thioredoxin as an electron donor. This Escherichia coli O8 (strain IAI1) protein is Phosphoadenosine 5'-phosphosulfate reductase.